A 314-amino-acid chain; its full sequence is Olfactory receptor 5D13 (314 aa).

The Extracellular segment spans residues 1–27 (MMASERNQSSTPTFILLGFSEYPEIQV). Asn7 carries an N-linked (GlcNAc...) asparagine glycan. The chain crosses the membrane as a helical span at residues 28–48 (PLFLVFLFVYTVTVVGNLGMI). The Cytoplasmic portion of the chain corresponds to 49-56 (IIIRLNSK). A helical transmembrane segment spans residues 57–77 (LHTIMCFFLSHLSLTDFCFST). Topologically, residues 78-101 (VVTPKLLENLVVEYRTISFSGCIM) are extracellular. A helical transmembrane segment spans residues 102–122 (QFCFACIFGVTETFMLAAMAY). Over 123–141 (DRFVAVCKPLLYTTIMSQK) the chain is Cytoplasmic. A helical membrane pass occupies residues 142-162 (LCALLVAGSYTWGIVCSLILT). The Extracellular segment spans residues 163 to 198 (YFLLDLSFCESTFINNFICDHSVIVSASYSDPYISQ). Residues 199–219 (RLCFIIAIFNEVSSLIIILTS) traverse the membrane as a helical segment. The Cytoplasmic portion of the chain corresponds to 220–239 (YMLIFTTIMKMRSASGRQKT). A helical membrane pass occupies residues 240 to 260 (FSTCASHLTAITIFHGTILFL). The Extracellular segment spans residues 261–273 (YCVPNPKTSSLIV). The chain crosses the membrane as a helical span at residues 274–294 (TVASVFYTVAIPMLNPLIYSL). The Cytoplasmic portion of the chain corresponds to 295–314 (RNKDINNMFEKLVVTKLIYH).

The protein belongs to the G-protein coupled receptor 1 family.

It is found in the cell membrane. Functionally, odorant receptor. The chain is Olfactory receptor 5D13 (OR5D13) from Homo sapiens (Human).